The following is a 577-amino-acid chain: Cryptochrome DASH, chloroplastic/mitochondrial (577 aa).

The transit peptide at 1–53 (MIKQPFLLTKFTPFSSKSKHTLFTFHCNFSIKMASLTARTTPTVQNVPGLTPE) directs the protein to the chloroplast and mitochondrion. The region spanning 78-219 (GVAIVWFRND…GNDPGSGNTT (142 aa)) is the Photolyase/cryptochrome alpha/beta domain. Residues 550–577 (TKKTGDSKTAFSSRRGRPEDNRRKRHGY) are disordered.

The protein belongs to the DNA photolyase class-1 family. It depends on FAD as a cofactor. (6R)-5,10-methylene-5,6,7,8-tetrahydrofolate is required as a cofactor. In terms of tissue distribution, expressed in the endosperm and embryo 96 hours after seed imbibition. In the embryo, detected in the root meristem, the root cap, the shoot apical meristem and the epidermis of cotyledons. In adult plants, detcted in roots, the whole leaf lamina, the stem and in glandular trichomes.

It localises to the plastid. The protein resides in the chloroplast. The protein localises to the mitochondrion. Functionally, may have a photoreceptor function and might bind ss- and ds-DNA in a sequence non-specific manner. Lacks photolyase activity. Has a potential role in detecting the dawn and dusk transitions and, consequently, in circadian input pathways. This chain is Cryptochrome DASH, chloroplastic/mitochondrial, found in Solanum lycopersicum (Tomato).